We begin with the raw amino-acid sequence, 622 residues long: Chaperone protein HscA homolog (622 aa).

This sequence belongs to the heat shock protein 70 family.

Its function is as follows. Chaperone involved in the maturation of iron-sulfur cluster-containing proteins. Has a low intrinsic ATPase activity which is markedly stimulated by HscB. The sequence is that of Chaperone protein HscA homolog from Pseudoalteromonas atlantica (strain T6c / ATCC BAA-1087).